Reading from the N-terminus, the 380-residue chain is QRFP-like peptide receptor (380 aa).

Over 1 to 51 the chain is Extracellular; sequence MMLGNMTFTQTILHELLRQHNMTKNEFIERFGLPPLVYVPELSPGAKTVTL. 2 N-linked (GlcNAc...) asparagine glycosylation sites follow: asparagine 5 and asparagine 21. Residues 52–72 form a helical membrane-spanning segment; the sequence is VFYVIIFLAALLGNTLVVVVV. Over 73 to 83 the chain is Cytoplasmic; the sequence is WKNKVMRTTMN. The helical transmembrane segment at 84–104 threads the bilayer; the sequence is IFICSLAASDLLITIVCIPVT. The Extracellular portion of the chain corresponds to 105 to 122; sequence LMQNMLQNWIMGDFMCKL. The cysteines at positions 120 and 203 are disulfide-linked. A helical membrane pass occupies residues 123-143; the sequence is VPFIQTIAVASSILTLTGIAI. Residues 144 to 164 are Cytoplasmic-facing; the sequence is ERYYAIIHPLKVKYLLSKTRA. A helical transmembrane segment spans residues 165 to 185; the sequence is GIILALVWVVSVGVATPMLFV. At 186-216 the chain is on the extracellular side; that stretch reads HKAEEIHDFLYEQRFVTCQEKWWGQTQQTSY. The helical transmembrane segment at 217–237 threads the bilayer; it reads TIFNLVVLFIIPLLTMTSLYI. Topologically, residues 238–269 are cytoplasmic; sequence RIAHRLWVQQPVGVTGNFAHGNSVRRKRQAVK. A helical membrane pass occupies residues 270 to 290; sequence MLVVVVLLFAVCWLPYHTVTV. The Extracellular portion of the chain corresponds to 291–305; it reads MNELTGLRLEEKSAK. Residues 306–326 traverse the membrane as a helical segment; it reads LLIAIVQLIAFSNSFNNPVVY. Over 327 to 380 the chain is Cytoplasmic; the sequence is AILNENFKKNFMTMLRCRVNRVSPQQVTPNTLQTPLEQSTRSCRLPAGAPNQQI.

It belongs to the G-protein coupled receptor 1 family.

Its subcellular location is the cell membrane. Receptor for QRFP-like peptide. The activity of this receptor is mediated by G proteins which activate a phosphatidyl-inositol-calcium second messenger system. This chain is QRFP-like peptide receptor, found in Branchiostoma floridae (Florida lancelet).